An 848-amino-acid polypeptide reads, in one-letter code: MNSITTPRMGATILRTIAPNVGVLSQVLPLGLRRVYPRGVRWVSSEIQQKDRQAGESNTATDTGVIHKTEQETLLYFDNVYARATSLWNPALWYNVLLRNQSRESVREKIKNLASPPDNPIHGLQLRSTIPVKRDGGVFATFLVPFNYTKAEVNTMIQQNTLNESKNSLFSYFTRATAFPVKGSPWIEDLKRLPSTTVIIKCQGPPLTEEEIYSLFRRYGTIIDIFPPNDTNKHFRVKYRSYRGAICAKNCVSGIEIHNTVLHLQYENVVKGHLIRNFYVTHTRIAIPVTFALLSILAVLIFDPIREFFIEQKITHQYQISWDNRYLKQLKNLTNSTVSTFKNYWGYDSSIISKRHLWEERIEKMDDLKMWLEENNNTFVLIRGPRGSGKHELVMQHTLHNRNNVLYIDCDKLIKSRTDAKFLRNAAGQLGYFPIFPWIDSVTNVLDLMVQGLTGQKSGLSETKESQFRNMLTTSLMAVRRIALKDYQSTINDAGDDVNIKEEDYLQQHPEAKPVIVIDRFEGKADINSFVYKELADWAAMLVQMNIAHVIFLTETVAANQRLSESLPNQVFKTMILSDASKANSRNYVLSELVEHYHKSLKRAKKAEEDEPTEKASPEHSQYDENDPRRYLSEELIQDIDDSLEPLGGRMLDLQAFVRRVKFGELPKEALDKMIEQASEQITQIFLSDKIDPLKSAQAWELIDLLSKNGKVYFHDIVFRPLFKAAPEIGILELENNGLITVSRDRGVLKEIRPFKPLYRAAFQYLIDDEDLKTVLMTRYHLKVINFETGRIKKWEEELRALGKINDQKLFKSRLDYLSKKITTSSDVINHCEDEIKKLSQESNNRRK.

The N-terminal 42 residues, Met-1–Trp-42, are a transit peptide targeting the mitochondrion. Topologically, residues Val-43–Arg-284 are mitochondrial matrix. Residues Thr-196–Val-269 form the RRM domain. Residues Ile-285–Ile-305 traverse the membrane as a helical segment. Residues Arg-306 to Lys-848 lie on the Mitochondrial intermembrane side of the membrane. A disordered region spans residues Arg-603–Asp-627. Over residues Thr-613–Asp-627 the composition is skewed to basic and acidic residues.

This sequence belongs to the YME2 family.

The protein localises to the mitochondrion inner membrane. In terms of biological role, plays a role in maintaining the mitochondrial genome and in controlling the mtDNA escape. Involved in the regulation of mtDNA nucleotide structure and number. May have a dispensable role in early maturation of pre-rRNA. The protein is Mitochondrial escape protein 2 (YME2) of Candida glabrata (strain ATCC 2001 / BCRC 20586 / JCM 3761 / NBRC 0622 / NRRL Y-65 / CBS 138) (Yeast).